A 355-amino-acid chain; its full sequence is Putative GPI-anchor transamidase (355 aa).

The N-terminal stretch at Met1–Ala24 is a signal peptide. Residues His165 and Cys207 contribute to the active site.

This sequence belongs to the peptidase C13 family.

It functions in the pathway glycolipid biosynthesis; glycosylphosphatidylinositol-anchor biosynthesis. In terms of biological role, mediates GPI anchoring in the endoplasmic reticulum, by replacing a protein's C-terminal GPI attachment signal peptide with a pre-assembled GPI. During this transamidation reaction, the GPI transamidase forms a carbonyl intermediate with the substrate protein. In Drosophila melanogaster (Fruit fly), this protein is Putative GPI-anchor transamidase.